The chain runs to 145 residues: MRTTYMAKPGEVERKWYVIDATGVSLGRLSSEVASILRGKNKPQFTPHIDTGDFVIIINAGKIGLTGKKATDKIYYRHSQYPGGLKSRTAGEMRTNNPEKLLELSIKGMLPKNSLGRQLFKKLHVYGGSEHEHAAQKPEVYELRG.

This sequence belongs to the universal ribosomal protein uL13 family. Part of the 50S ribosomal subunit.

In terms of biological role, this protein is one of the early assembly proteins of the 50S ribosomal subunit, although it is not seen to bind rRNA by itself. It is important during the early stages of 50S assembly. The sequence is that of Large ribosomal subunit protein uL13 from Listeria innocua serovar 6a (strain ATCC BAA-680 / CLIP 11262).